The sequence spans 430 residues: MGSGNHVDIVDVSSGEEDVDTRGDVEYTDWLNGVMEPVDDTSDSTDIVEVLSEVRGGVNSQYRKPNSSNQALEDDDDCVILDCDPDKTRETTSVDDDDDDDVLVVGQKGEIACRDFPHPRHSCAKYAFNSTSHEKYCDMCHCYVCDIRAPCPYWCIAVSSIDHCHANDKEKIWKNQREYFRTGYMPTAPSSKPTPSILRVPKNTLLRKNHVEIRPCSSSTRVANPSSVKARHRIRQPIPHNQGLQSQPAQSLSTVRDSVIQKDRSSYRFSLRSRVASSAGNGISIRFNNAQVSQSSHHSSSTVAPTLNPETYTQQRNVRDHCTALPGSQSNVFTRHADQNIRGSGNRQFQTNVDRFAPSKAPLTAEDSHTATVQQQPGINENVLETKLSEFEKWLMENPNPTGPVSPLPEPGNQDYASTLSFDFETFLND.

Positions 1 to 21 are disordered; the sequence is MGSGNHVDIVDVSSGEEDVDT. The nuclear localization stretch occupies residues 231–300; sequence RHRIRQPIPH…QVSQSSHHSS (70 aa).

As to quaternary structure, interacts with RPM1 (via its NB-ARC domain). Binds to ARF1 in the nucleus.

It localises to the nucleus. In terms of biological role, resistance protein interactor which positively enhances RPM1-mediated resistance to necrotrophic bacterial pathogens Pseudomonas syringae pv. tomato DC3000 harboring type III effector protein AvrRpm1 or AvrB, but prevents the hypersensitive response (HR) controlled by RPM1. Together with ARF1, promotes leaf senescence and cell death, probably by facilitating the translocation of ARF1 into the nucleus, and activates ROS-related enzymes (e.g. POD, CAT and SOD). This chain is RPM1 interacting protein 13, found in Arabidopsis thaliana (Mouse-ear cress).